Here is a 354-residue protein sequence, read N- to C-terminus: uncharacterized protein (354 aa).

The first 21 residues, 1-21 (MFQKKTYAVFLILLLMMFTAA), serve as a signal peptide directing secretion. A lipid anchor (N-palmitoyl cysteine) is attached at Cys22. Cys22 carries S-diacylglycerol cysteine lipidation.

The protein localises to the cell membrane. Its subcellular location is the membrane raft. This is an uncharacterized protein from Bacillus subtilis (strain 168).